We begin with the raw amino-acid sequence, 275 residues long: 3-methyl-2-oxobutanoate hydroxymethyltransferase (275 aa).

2 residues coordinate Mg(2+): Asp49 and Asp88. Residues Asp49 to Ser50, Asp88, and Lys118 each bind 3-methyl-2-oxobutanoate. Mg(2+) is bound at residue Glu120. The active-site Proton acceptor is Glu187.

Belongs to the PanB family. As to quaternary structure, homodecamer; pentamer of dimers. Mg(2+) is required as a cofactor.

Its subcellular location is the cytoplasm. The enzyme catalyses 3-methyl-2-oxobutanoate + (6R)-5,10-methylene-5,6,7,8-tetrahydrofolate + H2O = 2-dehydropantoate + (6S)-5,6,7,8-tetrahydrofolate. Its pathway is cofactor biosynthesis; (R)-pantothenate biosynthesis; (R)-pantoate from 3-methyl-2-oxobutanoate: step 1/2. Functionally, catalyzes the reversible reaction in which hydroxymethyl group from 5,10-methylenetetrahydrofolate is transferred onto alpha-ketoisovalerate to form ketopantoate. This Bartonella quintana (strain Toulouse) (Rochalimaea quintana) protein is 3-methyl-2-oxobutanoate hydroxymethyltransferase.